The sequence spans 142 residues: Ribonuclease VapC31 (142 aa).

One can recognise a PINc domain in the interval 3–139 (LLDANVLLAA…ARFASVRHIR (137 aa)). Asp5 and Asp108 together coordinate Mg(2+).

Belongs to the PINc/VapC protein family. Mg(2+) serves as cofactor.

In terms of biological role, toxic component of a type II toxin-antitoxin (TA) system. An RNase. Its toxic effect is neutralized by coexpression with cognate antitoxin VapB31. The sequence is that of Ribonuclease VapC31 from Mycobacterium tuberculosis (strain CDC 1551 / Oshkosh).